Reading from the N-terminus, the 207-residue chain is Ribonuclease HII (207 aa).

In terms of domain architecture, RNase H type-2 spans 12–201 (DLVAGVDEVG…VRAAWEVREG (190 aa)). The a divalent metal cation site is built by Asp-18, Glu-19, and Asp-110.

The protein belongs to the RNase HII family. It depends on Mn(2+) as a cofactor. Mg(2+) is required as a cofactor.

The protein resides in the cytoplasm. It catalyses the reaction Endonucleolytic cleavage to 5'-phosphomonoester.. Functionally, endonuclease that specifically degrades the RNA of RNA-DNA hybrids. The sequence is that of Ribonuclease HII from Pseudomonas putida (strain ATCC 700007 / DSM 6899 / JCM 31910 / BCRC 17059 / LMG 24140 / F1).